Here is a 286-residue protein sequence, read N- to C-terminus: MAGAKEIRSKIASIKSTQKITSAMEKVAVSKMRKAQMRMAASRPYAERIRQVIGHLANANPEYRHPFMIDRAIKRVGYVVVSSDRGLCGGLNTNLFKALVKDMAVNREQGVEIDLCVVGSKGAAFFRNFGGNVVAAISHLGEEPSINDLIGSVKVMLDAYLEGRIDRLSVVSNKFINTMTQQPTVEQLIPLEATPDQELKHHWDYLYEPDAKELLDGLMVRYVESQVYQAVVENNAAEQAARMIAMKNATDNAGDLISDLQLIYNKARQAAITQEISEIVGGAAAV.

The protein belongs to the ATPase gamma chain family. F-type ATPases have 2 components, CF(1) - the catalytic core - and CF(0) - the membrane proton channel. CF(1) has five subunits: alpha(3), beta(3), gamma(1), delta(1), epsilon(1). CF(0) has three main subunits: a, b and c.

Its subcellular location is the cell inner membrane. Produces ATP from ADP in the presence of a proton gradient across the membrane. The gamma chain is believed to be important in regulating ATPase activity and the flow of protons through the CF(0) complex. This Pseudomonas fluorescens (strain ATCC BAA-477 / NRRL B-23932 / Pf-5) protein is ATP synthase gamma chain.